The chain runs to 822 residues: Dimethyl sulfoxide/trimethylamine N-oxide reductase (822 aa).

The tat-type signal signal peptide spans Met-1–Ala-42. Residues Trp-158, Trp-158 to Ser-160, Ser-189, Lys-232 to Thr-233, Ile-262 to Asn-263, Gln-283 to Asp-285, Trp-364 to Ser-365, Arg-368, Asn-476, His-480, Gln-500 to Asp-501, Arg-523, Asp-553, Ala-683 to Pro-686, Arg-689, His-691 to Gln-693, Asn-779, and Gly-796 to Gln-797 each bind Mo-bis(molybdopterin guanine dinucleotide).

It belongs to the prokaryotic molybdopterin-containing oxidoreductase family. In terms of assembly, homodimer. It depends on Mo-bis(molybdopterin guanine dinucleotide) as a cofactor. In terms of processing, predicted to be exported by the Tat system. The position of the signal peptide cleavage has been experimentally proven.

It localises to the periplasm. The enzyme catalyses dimethyl sulfide + a menaquinone + H2O = dimethyl sulfoxide + a menaquinol. It catalyses the reaction trimethylamine + 2 Fe(III)-[cytochrome c] + H2O = trimethylamine N-oxide + 2 Fe(II)-[cytochrome c] + 3 H(+). Functionally, catalyzes the reduction of dimethyl sulfoxide (DMSO) and trimethylamine N-oxide (TMAO) to dimethyl sulfide (DMS) and trimethylamine, respectively. The terminal DMSO reductase can also use various sulfoxides and N-oxide compounds as terminal electron acceptor in addition to DMSO and TMAO. This is Dimethyl sulfoxide/trimethylamine N-oxide reductase (dmsA) from Cereibacter sphaeroides (Rhodobacter sphaeroides).